A 367-amino-acid chain; its full sequence is Germination protease (367 aa).

Residues 1–15 (MKEPLDLSKYAVRTD) constitute a propeptide that is removed on maturation.

This sequence belongs to the peptidase A25 family. Homotetramer. Autoproteolytically processed. The inactive tetrameric zymogen termed p46 autoprocesses to a smaller form termed p41, which is active only during spore germination.

It catalyses the reaction Endopeptidase action with P4 Glu or Asp, P1 preferably Glu &gt; Asp, P1' hydrophobic and P2' Ala.. Its function is as follows. Initiates the rapid degradation of small, acid-soluble proteins during spore germination. This is Germination protease from Bacillus cytotoxicus (strain DSM 22905 / CIP 110041 / 391-98 / NVH 391-98).